Here is a 270-residue protein sequence, read N- to C-terminus: LIM zinc-binding domain-containing Nebulette (270 aa).

The 61-residue stretch at 3-63 (PQCARCGKVV…NAHYPKQSFT (61 aa)) folds into the LIM zinc-binding domain. The stretch at 61-95 (SFTTVADTPENLRLKQQSELQSQVKYKRDFEESKG) is one Nebulin 1 repeat. Arginine 96 carries the omega-N-methylarginine modification. One copy of the Nebulin 2 repeat lies at 97–131 (GFSIVTDTPELQRLKRTQEQISNVKYHEDFEKTKG). Omega-N-methylarginine is present on arginine 132. One copy of the Nebulin 3 repeat lies at 133-159 (GFTPVVDDPVTERVRKSTQVVSDAAYK). The residue at position 135 (threonine 135) is a Phosphothreonine. The region spanning 210-270 (AHLRTYRAMY…LPANYIEFVN (61 aa)) is the SH3 domain. Phosphoserine is present on serine 230.

It is found in the cytoplasm. Binds to actin and plays an important role in the assembly of the Z-disk. Isoform 2 might play a role in the assembly of focal adhesion. The sequence is that of LIM zinc-binding domain-containing Nebulette (Nebl) from Mus musculus (Mouse).